The primary structure comprises 285 residues: Hydroxyethylthiazole kinase (285 aa).

A substrate-binding site is contributed by M43. ATP is bound by residues K119 and S172. Residue G199 participates in substrate binding.

The protein belongs to the Thz kinase family. It depends on Mg(2+) as a cofactor.

The enzyme catalyses 5-(2-hydroxyethyl)-4-methylthiazole + ATP = 4-methyl-5-(2-phosphooxyethyl)-thiazole + ADP + H(+). Its pathway is cofactor biosynthesis; thiamine diphosphate biosynthesis; 4-methyl-5-(2-phosphoethyl)-thiazole from 5-(2-hydroxyethyl)-4-methylthiazole: step 1/1. Its function is as follows. Catalyzes the phosphorylation of the hydroxyl group of 4-methyl-5-beta-hydroxyethylthiazole (THZ). This is Hydroxyethylthiazole kinase from Desulfovibrio desulfuricans (strain ATCC 27774 / DSM 6949 / MB).